Consider the following 115-residue polypeptide: uncharacterized protein (115 aa).

This is an uncharacterized protein from Haemophilus influenzae (strain ATCC 51907 / DSM 11121 / KW20 / Rd).